Here is a 186-residue protein sequence, read N- to C-terminus: Ribosome-recycling factor (186 aa).

It belongs to the RRF family.

It is found in the cytoplasm. Responsible for the release of ribosomes from messenger RNA at the termination of protein biosynthesis. May increase the efficiency of translation by recycling ribosomes from one round of translation to another. In Ralstonia nicotianae (strain ATCC BAA-1114 / GMI1000) (Ralstonia solanacearum), this protein is Ribosome-recycling factor.